A 454-amino-acid chain; its full sequence is uncharacterized protein (454 aa).

A signal peptide spans 1–18 (MRRFTLFVFFLSISIAYA).

This is an uncharacterized protein from Caenorhabditis elegans.